The chain runs to 162 residues: UPF0262 protein Pden_1958 (162 aa).

The tract at residues 1-22 (MSQSANRLCRIDIDDSALPPPS) is disordered.

The protein belongs to the UPF0262 family.

The chain is UPF0262 protein Pden_1958 from Paracoccus denitrificans (strain Pd 1222).